The sequence spans 99 residues: Gibberellin-regulated protein 3 (99 aa).

The first 26 residues, 1 to 26 (MAIFRSTLVLLLILFCLTTFELHVHA), serve as a signal peptide directing secretion.

It belongs to the GASA family. Post-translationally, six disulfide bonds may be present. Expressed in siliques, dry seeds and vasculature of roots and rosette leaves.

The protein resides in the secreted. Its function is as follows. Gibberellin-regulated protein that may function in hormonal controlled steps of development such as seed germination, flowering and seed maturation. This chain is Gibberellin-regulated protein 3 (GASA3), found in Arabidopsis thaliana (Mouse-ear cress).